The primary structure comprises 702 residues: Protein-glucosylgalactosylhydroxylysine glucosidase (702 aa).

310–311 (WD) serves as a coordination point for substrate. The Proton donor role is filled by E440. Residue 508 to 509 (KQ) coordinates substrate.

Belongs to the glycosyl hydrolase 65 family.

The catalysed reaction is (5R)-5-O-[alpha-D-glucosyl-(1-&gt;2)-beta-D-galactosyl]-5-hydroxy-L-lysyl-[collagen] + H2O = (5R)-5-O-(beta-D-galactosyl)-5-hydroxy-L-lysyl-[collagen] + D-glucose. In terms of biological role, catalyzes the hydrolysis of glucose from the disaccharide unit linked to hydroxylysine residues of collagen and collagen-like proteins. In Gallus gallus (Chicken), this protein is Protein-glucosylgalactosylhydroxylysine glucosidase.